The sequence spans 4499 residues: Dynein alpha chain, flagellar outer arm (4499 aa).

The segment at 1 to 1677 (MSIFWEVPNA…RIRICDASFP (1677 aa)) is stem. Kelch repeat units lie at residues 29 to 84 (RFVL…ALDD), 86 to 135 (RLLV…RFGS), 137 to 183 (VFIF…RFDH), 199 to 245 (KLLI…VCDG), 253 to 304 (KVFS…FDVK), and 307 to 358 (SLLI…IRGL). The Filamin repeat unit spans residues 425–534 (FANTAARNCI…IRGSPFTVKC (110 aa)). Kelch repeat units follow at residues 562–608 (ELVL…VLSD) and 610–661 (ELVV…AVSA). Positions 653 to 720 (PKGAAAVSAE…SRPVSAKPAP (68 aa)) are disordered. A compositionally biased stretch (low complexity) spans 655 to 689 (GAAAVSAEPSAEPAAEPAAEPAAEPDADAPAAEPA). Over residues 690–705 (AEGEEGAVPAEGEEGA) the composition is skewed to acidic residues. Kelch repeat units follow at residues 750-801 (LYVM…ATGN) and 864-913 (KLFL…TLSG). Coiled-coil stretches lie at residues 1261–1334 (ELHK…MIAN) and 1382–1450 (KKEL…RRAF). AAA stretches follow at residues 1678 to 1921 (YGYE…VLVV) and 1981 to 2225 (DVIV…KSYS). ATP-binding positions include 1716–1723 (GPAGTGKT) and 2019–2026 (GPTGTGRT). A Kelch 11 repeat occupies 2269–2317 (MIWAFGGGLVEKDGIPYRRNFDKWFKQTWTTVKIPGKGTVYDYFVNPKT). AAA stretches follow at residues 2331 to 2577 (DYDG…VFQG) and 2679 to 2928 (EYNE…ERRY). An ATP-binding site is contributed by 2369 to 2376 (GGAGVGKT). Residues 2655–2688 (LADKAYDEVADYTSLYKTLTEALNEYNETNAAMD) are a coiled coil. 2717-2724 (GVGGSGKQ) lines the ATP pocket. A coiled-coil region spans residues 3003–3023 (VGVEKEKVNAENAAAQVEAEK). The tract at residues 3003–3262 (VGVEKEKVNA…ERWALTVEQL (260 aa)) is stalk. A Kelch 12 repeat occupies 3070–3117 (LKKPPPGVDDITAVVIILLENNPKDKSWQAAQKLMNNVDKFLERVKSF). Coiled-coil stretches lie at residues 3170-3262 (DVVQ…VEQL) and 3486-3515 (NKER…ELED). Positions 3320–3550 (LVDDALVAGW…AKRVSTEISE (231 aa)) are AAA 5. Residues 3614 to 3687 (GRKKGKGLKK…VGDAEDEDDE (74 aa)) are disordered. The span at 3630–3653 (QPMDHQSLMEKARRSSGVGDRRPS) shows a compositional bias: basic and acidic residues. Residues 3843–4082 (LQNFCEHMMG…LTTCGDVLYN (240 aa)) are AAA 6.

Belongs to the dynein heavy chain family. In terms of assembly, consists of at least 3 heavy chains (alpha, beta and gamma), 2 intermediate chains and 8 light chains.

It localises to the cell projection. The protein localises to the cilium. Its subcellular location is the flagellum. It is found in the cytoplasm. The protein resides in the cytoskeleton. It localises to the flagellum axoneme. In terms of biological role, force generating protein of eukaryotic cilia and flagella. Produces force towards the minus ends of microtubules. Dynein has ATPase activity; the force-producing power stroke is thought to occur on release of ADP. The polypeptide is Dynein alpha chain, flagellar outer arm (ODA11) (Chlamydomonas reinhardtii (Chlamydomonas smithii)).